Consider the following 396-residue polypeptide: S-adenosylmethionine synthase (396 aa).

Position 16 (His-16) interacts with ATP. Asp-18 provides a ligand contact to Mg(2+). Glu-44 serves as a coordination point for K(+). Positions 57 and 100 each coordinate L-methionine. A flexible loop region spans residues 100–110 (QSVDIAQGVDR). ATP-binding positions include 165-167 (DAK), 231-232 (KF), Asp-240, 246-247 (RK), Ala-263, and Lys-267. An L-methionine-binding site is contributed by Asp-240. Position 271 (Lys-271) interacts with L-methionine.

It belongs to the AdoMet synthase family. In terms of assembly, homotetramer; dimer of dimers. Mg(2+) serves as cofactor. The cofactor is K(+).

The protein localises to the cytoplasm. It catalyses the reaction L-methionine + ATP + H2O = S-adenosyl-L-methionine + phosphate + diphosphate. Its pathway is amino-acid biosynthesis; S-adenosyl-L-methionine biosynthesis; S-adenosyl-L-methionine from L-methionine: step 1/1. Catalyzes the formation of S-adenosylmethionine (AdoMet) from methionine and ATP. The overall synthetic reaction is composed of two sequential steps, AdoMet formation and the subsequent tripolyphosphate hydrolysis which occurs prior to release of AdoMet from the enzyme. This chain is S-adenosylmethionine synthase, found in Marinobacter nauticus (strain ATCC 700491 / DSM 11845 / VT8) (Marinobacter aquaeolei).